Here is a 918-residue protein sequence, read N- to C-terminus: Protein translocase subunit SecA (918 aa).

ATP-binding positions include Gln-87, 105–109, and Asp-500; that span reads GEGKT. The tract at residues 876–918 is disordered; the sequence is AGALPVAETLERDTPESWRNTPRNAPCPCGSGKKYKHCHGQAR. Residues Cys-902, Cys-904, Cys-913, and His-914 each coordinate Zn(2+). A compositionally biased stretch (basic residues) spans 908-918; the sequence is KKYKHCHGQAR.

The protein belongs to the SecA family. In terms of assembly, monomer and homodimer. Part of the essential Sec protein translocation apparatus which comprises SecA, SecYEG and auxiliary proteins SecDF-YajC and YidC. Requires Zn(2+) as cofactor.

It localises to the cell inner membrane. The protein resides in the cytoplasm. The catalysed reaction is ATP + H2O + cellular proteinSide 1 = ADP + phosphate + cellular proteinSide 2.. Part of the Sec protein translocase complex. Interacts with the SecYEG preprotein conducting channel. Has a central role in coupling the hydrolysis of ATP to the transfer of proteins into and across the cell membrane, serving both as a receptor for the preprotein-SecB complex and as an ATP-driven molecular motor driving the stepwise translocation of polypeptide chains across the membrane. The protein is Protein translocase subunit SecA of Rhodospirillum centenum (strain ATCC 51521 / SW).